Here is a 273-residue protein sequence, read N- to C-terminus: MTSLVSAQRLGIVAVDEAIPLELRSRSTEEEVDAVILAVYRQVLGNDHLMSQERLTSAESLLRGREISVRDFVRAVALSEVYRQKFFHSNPQNRFIELNYKHLLGRAPYDQSEIAFHTDLYHQGGYEAEINSYIDSVEYTENFGDWVVPYFRGFATQRNQKTVGFSRSFQVYRGYATSDRSQGNGSRSRLTRELARNTASPVYAGSTAESLRGTSAGSRNQMYRLQVIQGAAPGRGTRVRRGKAEYLVSYDNLSAKLQQINRQGDTVTMISLA.

Positions 1–180 (MTSLVSAQRL…VYRGYATSDR (180 aa)) constitute a PBS-linker domain. The 54-residue stretch at 220–273 (NQMYRLQVIQGAAPGRGTRVRRGKAEYLVSYDNLSAKLQQINRQGDTVTMISLA) folds into the CpcD-like domain.

This sequence belongs to the phycobilisome linker protein family. As to quaternary structure, part of 2 PBS rod complexes, the conventional CpcG-PBS rod and a photosystem I-specific CpcL-PBS rod, both of which include ferredoxin--NADP reductase (petH). CpcG-PBS has on average 3 stacked phycocyanin hexamers (PC, CpcA and CpcB). Linker CpcG connects the PC stack to the thylakoid, the hexamers are linked by 1 copy of CpcC1, 1 copy of CpcC2 and the stack is terminated by a single copy of CpcD. The CpcL-PBS has on average 5 stacked phycocyanin hexamers (PC, CpcA and CpcB). Linker CpcL connects the PC stack to the thylakoid, the hexamers are linked by 1 copy of CpcC1, 3 copies of CpcC2 and the stack is terminated by a single copy of CpcD. Interacts with the C-phycocyanin (PC) beta subunit (cpcB), it may fit into the center of the PC hexamer.

It localises to the cellular thylakoid membrane. Its function is as follows. Rod linker protein, associated with phycocyanin. Linker polypeptides determine the state of aggregation and the location of the disk-shaped phycobiliprotein units within the phycobilisome and modulate their spectroscopic properties in order to mediate a directed and optimal energy transfer. The protein is Phycobilisome 32.1 kDa linker polypeptide, phycocyanin-associated, rod 2 (cpcC2) of Synechocystis sp. (strain ATCC 27184 / PCC 6803 / Kazusa).